The following is a 552-amino-acid chain: Carboxypeptidase Y homolog A (552 aa).

The signal sequence occupies residues 1–17; that stretch reads MRVLPATLLVGAATAAT. Positions 18–133 are excised as a propeptide; that stretch reads PAQQVLGGLQ…KLEAYDLRIK (116 aa). 5 disulfide bridges follow: Cys-188–Cys-428, Cys-322–Cys-336, Cys-346–Cys-369, Cys-353–Cys-362, and Cys-391–Cys-398. Asn-219 carries N-linked (GlcNAc...) asparagine glycosylation. Ser-275 is an active-site residue. The active site involves Asp-467. Asn-518 carries an N-linked (GlcNAc...) asparagine glycan. His-529 is an active-site residue.

This sequence belongs to the peptidase S10 family.

Its subcellular location is the vacuole. The catalysed reaction is Release of a C-terminal amino acid with broad specificity.. Its function is as follows. Vacuolar carboxypeptidase involved in degradation of small peptides. Digests preferentially peptides containing an aliphatic or hydrophobic residue in P1' position, as well as methionine, leucine or phenylalanine in P1 position of ester substrate. In Emericella nidulans (strain FGSC A4 / ATCC 38163 / CBS 112.46 / NRRL 194 / M139) (Aspergillus nidulans), this protein is Carboxypeptidase Y homolog A (cpyA).